Here is a 55-residue protein sequence, read N- to C-terminus: Neurotoxin B-II (55 aa).

At P10 the chain carries Hydroxyproline. Disulfide bonds link C12–C48, C16–C52, C23–C41, and C26–C37.

The protein belongs to the worm B-toxin family.

Its subcellular location is the secreted. Its function is as follows. This toxin increases the excitability of nerves by delaying the inactivation of the voltage-gated sodium channel (Nav). Only acts on some crustacean. Neurotoxin B-II is less abundant, but 15-fold more toxic than neurotoxin B-VI. The sequence is that of Neurotoxin B-II from Cerebratulus lacteus (Milky ribbon worm).